A 94-amino-acid chain; its full sequence is Large ribosomal subunit protein uL29 (94 aa).

A disordered region spans residues Asn-66 to Gly-94. Over residues Arg-73 to Gly-94 the composition is skewed to basic residues.

Belongs to the universal ribosomal protein uL29 family.

The polypeptide is Large ribosomal subunit protein uL29 (Leptospira borgpetersenii serovar Hardjo-bovis (strain JB197)).